The primary structure comprises 366 residues: UDP-N-acetylglucosamine--N-acetylmuramyl-(pentapeptide) pyrophosphoryl-undecaprenol N-acetylglucosamine transferase (366 aa).

Residues 10–12 (TGG), asparagine 124, arginine 165, serine 192, isoleucine 247, and glutamine 292 contribute to the UDP-N-acetyl-alpha-D-glucosamine site.

This sequence belongs to the glycosyltransferase 28 family. MurG subfamily.

The protein resides in the cell inner membrane. The catalysed reaction is di-trans,octa-cis-undecaprenyl diphospho-N-acetyl-alpha-D-muramoyl-L-alanyl-D-glutamyl-meso-2,6-diaminopimeloyl-D-alanyl-D-alanine + UDP-N-acetyl-alpha-D-glucosamine = di-trans,octa-cis-undecaprenyl diphospho-[N-acetyl-alpha-D-glucosaminyl-(1-&gt;4)]-N-acetyl-alpha-D-muramoyl-L-alanyl-D-glutamyl-meso-2,6-diaminopimeloyl-D-alanyl-D-alanine + UDP + H(+). Its pathway is cell wall biogenesis; peptidoglycan biosynthesis. Cell wall formation. Catalyzes the transfer of a GlcNAc subunit on undecaprenyl-pyrophosphoryl-MurNAc-pentapeptide (lipid intermediate I) to form undecaprenyl-pyrophosphoryl-MurNAc-(pentapeptide)GlcNAc (lipid intermediate II). This is UDP-N-acetylglucosamine--N-acetylmuramyl-(pentapeptide) pyrophosphoryl-undecaprenol N-acetylglucosamine transferase from Geotalea daltonii (strain DSM 22248 / JCM 15807 / FRC-32) (Geobacter daltonii).